The following is a 616-amino-acid chain: Dihydroxy-acid dehydratase (616 aa).

Residue aspartate 81 participates in Mg(2+) binding. Cysteine 122 serves as a coordination point for [2Fe-2S] cluster. Aspartate 123 and lysine 124 together coordinate Mg(2+). Lysine 124 is modified (N6-carboxylysine). Cysteine 195 contributes to the [2Fe-2S] cluster binding site. Glutamate 491 serves as a coordination point for Mg(2+). The active-site Proton acceptor is serine 517.

The protein belongs to the IlvD/Edd family. Homodimer. The cofactor is [2Fe-2S] cluster. Mg(2+) is required as a cofactor.

The catalysed reaction is (2R)-2,3-dihydroxy-3-methylbutanoate = 3-methyl-2-oxobutanoate + H2O. The enzyme catalyses (2R,3R)-2,3-dihydroxy-3-methylpentanoate = (S)-3-methyl-2-oxopentanoate + H2O. It participates in amino-acid biosynthesis; L-isoleucine biosynthesis; L-isoleucine from 2-oxobutanoate: step 3/4. The protein operates within amino-acid biosynthesis; L-valine biosynthesis; L-valine from pyruvate: step 3/4. Functions in the biosynthesis of branched-chain amino acids. Catalyzes the dehydration of (2R,3R)-2,3-dihydroxy-3-methylpentanoate (2,3-dihydroxy-3-methylvalerate) into 2-oxo-3-methylpentanoate (2-oxo-3-methylvalerate) and of (2R)-2,3-dihydroxy-3-methylbutanoate (2,3-dihydroxyisovalerate) into 2-oxo-3-methylbutanoate (2-oxoisovalerate), the penultimate precursor to L-isoleucine and L-valine, respectively. The polypeptide is Dihydroxy-acid dehydratase (Escherichia coli O1:K1 / APEC).